We begin with the raw amino-acid sequence, 195 residues long: Peptidyl-tRNA hydrolase (195 aa).

Tyr-18 is a tRNA binding site. The active-site Proton acceptor is the His-23. TRNA contacts are provided by Tyr-69, Asn-71, and Asn-117.

It belongs to the PTH family. In terms of assembly, monomer.

The protein localises to the cytoplasm. The catalysed reaction is an N-acyl-L-alpha-aminoacyl-tRNA + H2O = an N-acyl-L-amino acid + a tRNA + H(+). Its function is as follows. Hydrolyzes ribosome-free peptidyl-tRNAs (with 1 or more amino acids incorporated), which drop off the ribosome during protein synthesis, or as a result of ribosome stalling. Catalyzes the release of premature peptidyl moieties from peptidyl-tRNA molecules trapped in stalled 50S ribosomal subunits, and thus maintains levels of free tRNAs and 50S ribosomes. The polypeptide is Peptidyl-tRNA hydrolase (Nitrosomonas eutropha (strain DSM 101675 / C91 / Nm57)).